The sequence spans 322 residues: Replication-associated protein G2P (322 aa).

The protein belongs to the inovirus G2P protein family.

It catalyses the reaction ATP + (deoxyribonucleotide)n-3'-hydroxyl + 5'-phospho-(deoxyribonucleotide)m = (deoxyribonucleotide)n+m + AMP + diphosphate.. In terms of biological role, isoform G2P plays an essential role in viral DNA replication. Binds the origin of replication and cleaves the dsDNA replicative form I (RFI) and becomes covalently bound to it via phosphotyrosine bond, generating the dsDNA replicative form II (RFII). In turn, viral DNA replication initiates at the 3'-OH of the cleavage site. After one round of rolling circle synthesis, protein G2P is linked to the newly synthesized ssDNA and joins the ends of the displaced strand to generate a circular single-stranded molecule ready to be packed into a virion. Functionally, isoform G10P protein binds to double-stranded DNA and prevents hydrolysis by nucleases. Additionally, G10P is an inhibitor of DNA replication and may have a role in the transition from semiconservative replicative form DNA replication to single-stranded DNA synthesis in the life cycle. This is Replication-associated protein G2P (II) from Escherichia phage If1 (Bacteriophage If1).